A 331-amino-acid chain; its full sequence is MKLWFPYFLAIVFLHALGLALLFMANNASFYAAASMAYMLGAKHAFDADHIACIDNTIRKLTQQGKNAYGVGFYFSMGHSSVVILMTIISAFAIAWAKEHTPMLEEIGGVVGTLVSGLFLLIIGLLNAIILIDLLKIFKKSHSNESLSRQQNEEIERLLTSRGLLNRFFKPLFNFVSKSWHIYPVGFLFGLGFDTASEIALLALSSSAIKVSVVGMLSLPILFAAGMSLFDTLDGAFMLKAYDWAFKTPLRKIYYNISITALSVFIALFIGLIELFQVISEKLHLKFENRLLSTLQSLEFTDLGYYLVGLFVIAFLGSFFLWKIKFSKLES.

7 consecutive transmembrane segments (helical) span residues 3 to 23 (LWFP…ALLF), 77 to 97 (MGHS…IAWA), 110 to 130 (VVGT…NAII), 184 to 204 (PVGF…LLAL), 213 to 233 (VVGM…FDTL), 259 to 279 (ITAL…FQVI), and 302 to 322 (DLGY…FFLW).

It belongs to the NiCoT transporter (TC 2.A.52) family.

It is found in the cell inner membrane. High-affinity nickel intake protein. Imports nickel ions in an energy-dependent fashion. Necessary for the expression of catalytically active urease. The polypeptide is High-affinity nickel-transport protein NixA (nixA) (Helicobacter pylori (strain J99 / ATCC 700824) (Campylobacter pylori J99)).